The sequence spans 72 residues: Protein kish-A (72 aa).

The N-terminal stretch at 1-26 (MSAIFNFQSLLIVILLLICTCAYLRA) is a signal peptide. The Extracellular segment spans residues 27 to 53 (LVPNLLDKNKTGILGIFWKCARIGERK). N35 is a glycosylation site (N-linked (GlcNAc...) asparagine). A helical membrane pass occupies residues 54-71 (SPYVAVCCVVMAFSILFM). Position 72 (Q72) is a topological domain, cytoplasmic.

This sequence belongs to the KISH family.

Its subcellular location is the golgi apparatus membrane. Involved in the early part of the secretory pathway. The sequence is that of Protein kish-A (tmem167a) from Xenopus tropicalis (Western clawed frog).